The following is a 178-amino-acid chain: MEFLMKKVVFALSALAVVSTSAFAAESGDGTIKFTGEIVDAPCVVSTDSQNQEVVLGQVKKNIFKAIGDKSSSKPFQIKLEDCDITSNTKVNVSFNGVGDTDDATLVSVNTEAGAATGVGIGIYDNANKLVEMNTGKSTTTLAAGQTVLYYTANYVATKDTVTTGYGNAEVDFNLSYE.

An N-terminal signal peptide occupies residues 1–24 (MEFLMKKVVFALSALAVVSTSAFA).

It belongs to the fimbrial protein family.

It is found in the fimbrium. The chain is Long polar fimbria protein A (lpfA) from Salmonella typhimurium (strain LT2 / SGSC1412 / ATCC 700720).